The following is a 245-amino-acid chain: 6-carboxyhexanoate--CoA ligase (245 aa).

The protein belongs to the BioW family. In terms of assembly, homodimer. Mg(2+) is required as a cofactor.

It carries out the reaction heptanedioate + ATP + CoA = 6-carboxyhexanoyl-CoA + AMP + diphosphate. Its pathway is metabolic intermediate metabolism; pimeloyl-CoA biosynthesis; pimeloyl-CoA from pimelate: step 1/1. Its function is as follows. Catalyzes the transformation of pimelate into pimeloyl-CoA with concomitant hydrolysis of ATP to AMP. The sequence is that of 6-carboxyhexanoate--CoA ligase from Thermodesulfovibrio yellowstonii (strain ATCC 51303 / DSM 11347 / YP87).